A 129-amino-acid polypeptide reads, in one-letter code: Small ribosomal subunit protein uS11 (129 aa).

This sequence belongs to the universal ribosomal protein uS11 family. Part of the 30S ribosomal subunit. Interacts with proteins S7 and S18. Binds to IF-3.

Located on the platform of the 30S subunit, it bridges several disparate RNA helices of the 16S rRNA. Forms part of the Shine-Dalgarno cleft in the 70S ribosome. The protein is Small ribosomal subunit protein uS11 of Colwellia psychrerythraea (strain 34H / ATCC BAA-681) (Vibrio psychroerythus).